A 951-amino-acid polypeptide reads, in one-letter code: Kinase suppressor of Ras 2 (951 aa).

Residues 237–298 (PPPPPLESGH…PGTPPPSSRK (62 aa)) form a disordered region. Over residues 260 to 274 (RTPPRTPNIVTTVTP) the composition is skewed to low complexity. Threonine 273 and threonine 277 each carry phosphothreonine. The segment at 413–457 (KHRFSTKYWMSQTCTVCGKGMLFGLKCKNCKLKCHNKCTKEAPPC) adopts a Phorbol-ester/DAG-type zinc-finger fold. Residues histidine 414, cysteine 426, cysteine 429, cysteine 439, cysteine 442, histidine 447, cysteine 450, and cysteine 457 each coordinate Zn(2+). Phosphoserine; by MARK3 is present on serine 475. Disordered stretches follow at residues 489–559 (RYSD…QKKN) and 614–634 (EPTS…DEFE). Polar residues predominate over residues 494–503 (HISQTLPKTN). At threonine 498 the chain carries Phosphothreonine. Residues 518–531 (SSSNPSSTTSSTPS) are compositionally biased toward low complexity. Pro residues predominate over residues 532-552 (SPAPPLPPSATPPSPLHPSPQ). A Protein kinase domain is found at 667–932 (LEIGELIGKG…TKLMDMLEKL (266 aa)). Position 673–681 (673–681 (IGKGRFGQV)) interacts with ATP. Residue aspartate 787 is the Proton donor/acceptor of the active site. 2 residues coordinate ATP: lysine 789 and aspartate 804.

This sequence belongs to the protein kinase superfamily. TKL Ser/Thr protein kinase family. In terms of assembly, heterodimerizes (via N-terminus) with BRAF (via N-terminus) in a MAP2K1/MEK1-dependent manner. Interacts with BRAF; this increases the low intrinsic protein kinase activity of KSR2. Interacts with MAP2K1, forming a heterodimer that can dimerize to form a heterotetramer. Interacts with MAP3K8, MAPK, RAS and RAF. Post-translationally, phosphorylated on Ser-475 by MARK3.

The protein resides in the cytoplasm. It is found in the membrane. It carries out the reaction L-seryl-[protein] + ATP = O-phospho-L-seryl-[protein] + ADP + H(+). The enzyme catalyses L-threonyl-[protein] + ATP = O-phospho-L-threonyl-[protein] + ADP + H(+). Its function is as follows. Location-regulated scaffold connecting MEK to RAF. Has very low protein kinase activity and can phosphorylate MAP2K1 at several Ser and Thr residues with very low efficiency (in vitro). Acts as MAP2K1/MEK1-dependent allosteric activator of BRAF; upon binding to MAP2K1/MEK1, dimerizes with BRAF and promotes BRAF-mediated phosphorylation of MAP2K1/MEK1. Interaction with BRAF enhances KSR2-mediated phosphorylation of MAP2K1 (in vitro). Blocks MAP3K8 kinase activity and MAP3K8-mediated signaling. Acts as a negative regulator of MAP3K3-mediated activation of ERK, JNK and NF-kappa-B pathways, inhibiting MAP3K3-mediated interleukin-8 production. This chain is Kinase suppressor of Ras 2, found in Mus musculus (Mouse).